The chain runs to 67 residues: Conotoxin Cl14.2b (67 aa).

The signal sequence occupies residues 1–20 (MNVTVMFLVLLLLTMPLTDG). Residues 21-48 (FNIRATNGGELFGPVQRDAGNVLDHGFQ) constitute a propeptide that is removed on maturation.

It belongs to the conotoxin L superfamily. Contains 2 disulfide bonds. In terms of tissue distribution, expressed by the venom duct.

The protein resides in the secreted. In terms of biological role, increases calcium current amplitude through Cav1.2/Cav1.3 channels in rat pancreatic beta-cells, which is a prerequisite for eliciting insulin secretion. Stimulates insulin secretion in NIT-1 insulinoma cell lines. In vivo, significantly decreases mice blood glucose levels as of 45 minutes after treatment, similarly to insulin treatment. Has a potential therapeutic use in endocrinal pathologies such as early stages of type 2 diabetes where the pancreas's capability to produce insulin is still effective. This chain is Conotoxin Cl14.2b, found in Californiconus californicus (California cone).